The primary structure comprises 389 residues: 2-aminoethylphosphonate--pyruvate transaminase 1 (389 aa).

Position 196 is an N6-(pyridoxal phosphate)lysine (lysine 196).

The protein belongs to the class-V pyridoxal-phosphate-dependent aminotransferase family. PhnW subfamily. Homodimer. The cofactor is pyridoxal 5'-phosphate.

It catalyses the reaction (2-aminoethyl)phosphonate + pyruvate = phosphonoacetaldehyde + L-alanine. Functionally, involved in phosphonate degradation. The sequence is that of 2-aminoethylphosphonate--pyruvate transaminase 1 from Paraburkholderia xenovorans (strain LB400).